A 773-amino-acid chain; its full sequence is FT-interacting protein 3 (773 aa).

The segment covering Met-1–Pro-16 has biased composition (basic and acidic residues). Residues Met-1–Ser-24 form a disordered region. C2 domains follow at residues Lys-22–Tyr-142, Val-181–Tyr-305, and Tyr-345–Tyr-471. Residues Asp-55, Asp-61, Asp-108, Asp-110, and Asp-115 each contribute to the Ca(2+) site. A run of 3 helical transmembrane segments spans residues Ile-574–Trp-594, Ile-608–Ile-628, and Leu-716–Val-736.

The protein belongs to the MCTP family. Interacts with and regulates subcellular localization and trafficking of STM. The cofactor is Ca(2+). In terms of tissue distribution, accumulates in vascular tissues, leaf primordia and flowers. Highly expressed in roots meristems and in both vegetative and inflorescence shoot apical meristems (SAMs).

Its subcellular location is the endoplasmic reticulum membrane. The protein localises to the cytoplasm. It is found in the vesicle. The protein resides in the cell membrane. It localises to the endosome membrane. Its subcellular location is the golgi apparatus membrane. Functionally, required for proliferation and differentiation of shoot stem cells in the shoot apical meristem (SAM), thus determining the appropriate balance between the maintenance of shoot stem cells and their differentiation into other aboveground plant parts via the control of subcellular localization and intercellular trafficking of STM in the shoot apex. Prevents intracellular trafficking of STM to the plasma membrane in cells in the peripheral shoot meristem region thus facilitating STM recycling to the nucleus to maintain stem cells. May function as a signaling molecule by regulating the trafficking of other regulators. This chain is FT-interacting protein 3, found in Arabidopsis thaliana (Mouse-ear cress).